The chain runs to 186 residues: Cell division protein SepF (186 aa).

Disordered regions lie at residues 14-59 (EHDE…NETS) and 157-186 (GRSQ…RLAQ). Residues 16-27 (DEYEEDYDEEME) show a composition bias toward acidic residues. Over residues 159–171 (SQESNETSSSVSS) the composition is skewed to low complexity.

The protein belongs to the SepF family. In terms of assembly, homodimer. Interacts with FtsZ.

It localises to the cytoplasm. Its function is as follows. Cell division protein that is part of the divisome complex and is recruited early to the Z-ring. Probably stimulates Z-ring formation, perhaps through the cross-linking of FtsZ protofilaments. Its function overlaps with FtsA. The chain is Cell division protein SepF from Synechocystis sp. (strain ATCC 27184 / PCC 6803 / Kazusa).